Reading from the N-terminus, the 134-residue chain is uncharacterized protein (134 aa).

Positions 4–107 constitute an HIT domain; sequence IFTKIINREL…PTHSLSNFSF (104 aa). Residues 91–95 carry the Histidine triad motif motif; the sequence is HLHIH.

This is an uncharacterized protein from Mycobacterium leprae (strain TN).